The primary structure comprises 242 residues: Peroxisomal membrane protein 11-3 (242 aa).

The interval 1–22 (MAAAAAAAGSSDSRKPAAHPPP) is disordered. Residues 1 to 102 (MAAAAAAAGS…LRAHPHPPPA (102 aa)) lie on the Cytoplasmic side of the membrane. A helical membrane pass occupies residues 103–123 (VALLAYGGEGVYYFLEQFVWL). The Lumenal portion of the chain corresponds to 124 to 214 (AKAGLLPAHL…MALGDVTDGK (91 aa)). Residues 215–235 (GLLGSSTLMASAGLLSALISA) traverse the membrane as a helical segment. Topologically, residues 236–242 (HKNWNSC) are cytoplasmic.

This sequence belongs to the peroxin-11 family. Expressed in seedlings, roots, leaf sheaths, spikelets and endosperm.

The protein localises to the peroxisome membrane. Its function is as follows. Involved in peroxisomal proliferation. The polypeptide is Peroxisomal membrane protein 11-3 (PEX11-3) (Oryza sativa subsp. japonica (Rice)).